The primary structure comprises 317 residues: Melanocyte-stimulating hormone receptor (317 aa).

Residues 1-37 (MPMHGAQRKLLGSLNSTPTATSNLGLAANHTGAPCLE) are Extracellular-facing. Residue N29 is glycosylated (N-linked (GlcNAc...) asparagine). Residues 38 to 63 (VSIPDGLFLSLGLVSLVENVLVVAAI) form a helical membrane-spanning segment. The Cytoplasmic portion of the chain corresponds to 64-72 (AKNRNLHSS). A helical transmembrane segment spans residues 73–93 (MYCFICCLALSDLLVSGSNML). The Extracellular portion of the chain corresponds to 94–118 (ETAVILLLEAGALATRTSAMQQLHN). The helical transmembrane segment at 119–140 (TIDVLTCSSMLCSLCFLGAIAV) threads the bilayer. At 141–163 (DRYISIFYALRYHSIMTLPRAQR) the chain is on the cytoplasmic side. Residues 164-183 (AIAAIWVASXLSSTLFITYY) form a helical membrane-spanning segment. The Extracellular segment spans residues 184–191 (DHAAVLLC). Residues 192–211 (LVVFFLAMLVLMAVLYVHML) traverse the membrane as a helical segment. Residues 212-240 (ARACQHAHGIIRLHKRQTPAHQGFGLRGA) are Cytoplasmic-facing. A helical transmembrane segment spans residues 241–266 (ATLTILLGIFFLCWGPFFLHLTLVVF). Topologically, residues 267–279 (CPQHLTCSCIFKN) are extracellular. The helical transmembrane segment at 280 to 300 (FKVFLTLIICNTIIDPLIYAF) threads the bilayer. Topologically, residues 301-317 (RSQELRRTLKEVLLCSW) are cytoplasmic. C315 carries the S-palmitoyl cysteine lipid modification.

Belongs to the G-protein coupled receptor 1 family. In terms of assembly, interacts with MGRN1, but does not undergo MGRN1-mediated ubiquitination; this interaction competes with GNAS-binding and thus inhibits agonist-induced cAMP production. Interacts with OPN3; the interaction results in a decrease in MC1R-mediated cAMP signaling and ultimately a decrease in melanin production in melanocytes.

Its subcellular location is the cell membrane. Receptor for MSH (alpha, beta and gamma) and ACTH. The activity of this receptor is mediated by G proteins which activate adenylate cyclase. Mediates melanogenesis, the production of eumelanin (black/brown) and phaeomelanin (red/yellow), via regulation of cAMP signaling in melanocytes. The chain is Melanocyte-stimulating hormone receptor (MC1R) from Saguinus midas (Golden-handed tamarin).